The following is a 130-amino-acid chain: Cytochrome b-c1 complex subunit 7 (130 aa).

This sequence belongs to the UQCRB/QCR7 family. In terms of assembly, component of the ubiquinol-cytochrome c oxidoreductase (cytochrome b-c1 complex, complex III, CIII), a multisubunit enzyme composed of 3 respiratory subunits cytochrome b, cytochrome c1 and Rieske protein, 2 core protein subunits, and additional low-molecular weight protein subunits. The complex exists as an obligatory dimer and forms supercomplexes (SCs) in the inner mitochondrial membrane with cytochrome c oxidase (complex IV, CIV).

The protein localises to the mitochondrion inner membrane. Its function is as follows. Component of the ubiquinol-cytochrome c oxidoreductase, a multisubunit transmembrane complex that is part of the mitochondrial electron transport chain which drives oxidative phosphorylation. The respiratory chain contains 3 multisubunit complexes succinate dehydrogenase (complex II, CII), ubiquinol-cytochrome c oxidoreductase (cytochrome b-c1 complex, complex III, CIII) and cytochrome c oxidase (complex IV, CIV), that cooperate to transfer electrons derived from NADH and succinate to molecular oxygen, creating an electrochemical gradient over the inner membrane that drives transmembrane transport and the ATP synthase. The cytochrome b-c1 complex catalyzes electron transfer from ubiquinol to cytochrome c, linking this redox reaction to translocation of protons across the mitochondrial inner membrane, with protons being carried across the membrane as hydrogens on the quinol. In the process called Q cycle, 2 protons are consumed from the matrix, 4 protons are released into the intermembrane space and 2 electrons are passed to cytochrome c. The polypeptide is Cytochrome b-c1 complex subunit 7 (Schistosoma mansoni (Blood fluke)).